The following is a 403-amino-acid chain: Stearoyl-[acyl-carrier-protein] 9-desaturase 4, chloroplastic (403 aa).

A chloroplast-targeting transit peptide spans 1-44 (MALLLNSTMTVAMKQNPATAVSFMQTTCLGSSFSPPRHLQVSCV). Fe cation-binding residues include Glu140, Glu178, His181, Glu231, Glu264, and His267.

Belongs to the fatty acid desaturase type 2 family. Homodimer. It depends on Fe(2+) as a cofactor. In terms of tissue distribution, preferentially expressed in roots.

It is found in the plastid. Its subcellular location is the chloroplast. It carries out the reaction octadecanoyl-[ACP] + 2 reduced [2Fe-2S]-[ferredoxin] + O2 + 2 H(+) = (9Z)-octadecenoyl-[ACP] + 2 oxidized [2Fe-2S]-[ferredoxin] + 2 H2O. It participates in lipid metabolism; fatty acid metabolism. In terms of biological role, converts stearoyl-ACP to oleoyl-ACP by introduction of a cis double bond between carbons 9 and 10 of the acyl chain. The polypeptide is Stearoyl-[acyl-carrier-protein] 9-desaturase 4, chloroplastic (S-ACP-DES4) (Arabidopsis thaliana (Mouse-ear cress)).